The following is a 408-amino-acid chain: Alkane 1-monooxygenase (408 aa).

The next 4 helical transmembrane spans lie at 30–50, 58–78, 102–122, and 126–146; these read LWMI…GYQF, IFAL…DTII, LVKS…YLVS, and TSFI…GIAV. Residues H150, H154, H180, H184, and H185 each contribute to the Fe cation site. A helical transmembrane segment spans residues 254 to 274; that stretch reads IIAIFGKGTIPYLVTQAFYGI. 3 residues coordinate Fe cation: H324, H327, and H328.

Belongs to the fatty acid desaturase type 1 family. AlkB subfamily. The cofactor is Fe(3+).

The protein localises to the cell inner membrane. The catalysed reaction is octane + 2 reduced [rubredoxin] + O2 + 2 H(+) = 2 oxidized [rubredoxin] + octan-1-ol + H2O. It functions in the pathway hydrocarbon metabolism; alkane degradation. Functionally, catalyzes the hydroxylation of n-alkanes in the presence of a NADH-rubredoxin reductase and rubredoxin. It preferably hydroxylases long-chain-length alkanes with at least 12 carbon atoms. This chain is Alkane 1-monooxygenase (alkB), found in Acinetobacter baylyi (strain ATCC 33305 / BD413 / ADP1).